Consider the following 65-residue polypeptide: Large ribosomal subunit protein uL29 (65 aa).

This sequence belongs to the universal ribosomal protein uL29 family.

This Lactobacillus helveticus (strain DPC 4571) protein is Large ribosomal subunit protein uL29.